We begin with the raw amino-acid sequence, 295 residues long: Glutamyl-Q tRNA(Asp) synthetase (295 aa).

L-glutamate contacts are provided by residues R9–T13 and E45. Residues P12–S22 carry the 'HIGH' region motif. Positions 101, 103, 115, and 119 each coordinate Zn(2+). Positions 172 and 190 each coordinate L-glutamate. The 'KMSKS' region motif lies at K228–S232. Position 231 (K231) interacts with ATP.

It belongs to the class-I aminoacyl-tRNA synthetase family. GluQ subfamily. Requires Zn(2+) as cofactor.

In terms of biological role, catalyzes the tRNA-independent activation of glutamate in presence of ATP and the subsequent transfer of glutamate onto a tRNA(Asp). Glutamate is transferred on the 2-amino-5-(4,5-dihydroxy-2-cyclopenten-1-yl) moiety of the queuosine in the wobble position of the QUC anticodon. The polypeptide is Glutamyl-Q tRNA(Asp) synthetase (Pseudomonas entomophila (strain L48)).